The following is a 522-amino-acid chain: Putative aldehyde dehydrogenase-like protein C21C3 (522 aa).

The active-site Proton acceptor is glutamate 239. Cysteine 273 acts as the Nucleophile in catalysis.

The protein belongs to the aldehyde dehydrogenase family.

It is found in the cytoplasm. The protein resides in the nucleus. The polypeptide is Putative aldehyde dehydrogenase-like protein C21C3 (Schizosaccharomyces pombe (strain 972 / ATCC 24843) (Fission yeast)).